The chain runs to 525 residues: MNDLKKSPLLILDFGSQYTQLIARRVREMGVYCEIYPYNINHEQFKKLNPCGVILSGGPSTVTHDANPRAPQWLFESDLPLLGICYGMQTMAVQLGGQVHSSTLREFGYAELRLHGHSQLLSNIEDRTAMDGSALLDVWMSHGDKVTELPPGFKVICETRNAPIAGMADESRQMYGLQFHPEVTHTLQGLRILQRFVVDICKASTDWTPEHIIDEAINKIREQVGTEKVLLGLSGGVDSSVVAALLHRAIGEQLVCVFVDTGLLRLNEAEQVLSMFGRHMGIRIIAVNAEDKFLTALKGVTCPEEKRKIIGRTFIEVFDEEAQKLTDIKWLAQGTIYPDVIESAATSTNDAAVVIKSHHNVGGLPDTLNLKLLEPIRELFKDEVRQVGLELGLPHDMVYRHPFPGPGLGVRILAEVKKEYADILRKADAIFIEELHNAQLYHKISQAFAVFLPVKSVGVMGDGRRYDYVICLRAVETVDFMTAHWSQLPWDFLGKVSNRIINEVEGVSRVTYDISGKPPATIEWE.

The Glutamine amidotransferase type-1 domain maps to 8–206; sequence PLLILDFGSQ…VVDICKASTD (199 aa). Cys85 (nucleophile) is an active-site residue. Residues His180 and Glu182 contribute to the active site. Residues 207 to 400 form the GMPS ATP-PPase domain; sequence WTPEHIIDEA…LGLPHDMVYR (194 aa). 234 to 240 is an ATP binding site; sequence SGGVDSS.

As to quaternary structure, homodimer.

It catalyses the reaction XMP + L-glutamine + ATP + H2O = GMP + L-glutamate + AMP + diphosphate + 2 H(+). Its pathway is purine metabolism; GMP biosynthesis; GMP from XMP (L-Gln route): step 1/1. Catalyzes the synthesis of GMP from XMP. This chain is GMP synthase [glutamine-hydrolyzing], found in Legionella pneumophila (strain Lens).